Here is a 287-residue protein sequence, read N- to C-terminus: Lectin 10 (287 aa).

Topologically, residues 1–11 (MALSNLKSNRT) are cytoplasmic. A helical membrane pass occupies residues 12-31 (LSSSLITIFIISLFLQYHNI). Topologically, residues 32–287 (KSQSSWQSRQ…IINWSFESAL (256 aa)) are extracellular. N-linked (GlcNAc...) asparagine glycans are attached at residues Asn-124, Asn-147, Asn-243, and Asn-280.

The protein belongs to the leguminous lectin family.

It is found in the membrane. Its function is as follows. May be involved in arbuscular mycorrhizal (AM) symbiosis with AM fungi. The sequence is that of Lectin 10 from Medicago truncatula (Barrel medic).